The chain runs to 243 residues: DNA repair protein RecO (243 aa).

Belongs to the RecO family.

Involved in DNA repair and RecF pathway recombination. The polypeptide is DNA repair protein RecO (Beutenbergia cavernae (strain ATCC BAA-8 / DSM 12333 / CCUG 43141 / JCM 11478 / NBRC 16432 / NCIMB 13614 / HKI 0122)).